The primary structure comprises 123 residues: Ribonuclease P protein component 2 (123 aa).

Belongs to the eukaryotic/archaeal RNase P protein component 2 family. In terms of assembly, consists of a catalytic RNA component and at least 4 protein subunits.

The enzyme catalyses Endonucleolytic cleavage of RNA, removing 5'-extranucleotides from tRNA precursor.. Part of ribonuclease P, a protein complex that generates mature tRNA molecules by cleaving their 5'-ends. The polypeptide is Ribonuclease P protein component 2 (Aeropyrum pernix (strain ATCC 700893 / DSM 11879 / JCM 9820 / NBRC 100138 / K1)).